The following is a 157-amino-acid chain: Small ribosomal subunit protein uS7 (157 aa).

Belongs to the universal ribosomal protein uS7 family. As to quaternary structure, part of the 30S ribosomal subunit. Contacts proteins S9 and S11.

In terms of biological role, one of the primary rRNA binding proteins, it binds directly to 16S rRNA where it nucleates assembly of the head domain of the 30S subunit. Is located at the subunit interface close to the decoding center, probably blocks exit of the E-site tRNA. The polypeptide is Small ribosomal subunit protein uS7 (Chlamydia pneumoniae (Chlamydophila pneumoniae)).